A 606-amino-acid chain; its full sequence is WD repeat-containing protein 1 (606 aa).

13 WD repeats span residues 4–45, 48–87, 93–135, 138–176, 180–218, 224–263, 270–306, 311–351, 358–408, 432–474, 480–518, 523–561, and 566–604; these read EIKK…LRNI, PAIA…IWDT, LLKY…LWDS, SVGE…FFEG, KFKF…IYDG, VCAL…IWDV, NTFT…YLDK, KPLR…YWDS, SFAG…KLDV, LKDQ…LYSI, KDEG…VFSV, SENN…VWTL, and TRVK…EWTI. Residues lysine 28, lysine 81, lysine 95, and lysine 115 each carry the N6-acetyllysine modification. Residue tyrosine 238 is modified to Phosphotyrosine. Lysine 480 carries the post-translational modification N6-acetyllysine.

It belongs to the WD repeat AIP1 family.

Its subcellular location is the cytoplasm. The protein localises to the cytoskeleton. It localises to the cell projection. It is found in the podosome. Its function is as follows. Induces disassembly of actin filaments in conjunction with ADF/cofilin family proteins. Enhances cofilin-mediated actin severing. Involved in cytokinesis. Involved in chemotactic cell migration by restricting lamellipodial membrane protrusions. Involved in myocardium sarcomere organization. Required for cardiomyocyte growth and maintenance. Involved in megakaryocyte maturation and platelet shedding. Required for the establishment of planar cell polarity (PCP) during follicular epithelium development and for cell shape changes during PCP; the function seems to implicate cooperation with CFL1 and/or DSTN/ADF. Involved in the generation/maintenance of cortical tension. Involved in assembly and maintenance of epithelial apical cell junctions and plays a role in the organization of the perijunctional actomyosin belt. This is WD repeat-containing protein 1 (WDR1) from Bos taurus (Bovine).